The following is a 99-amino-acid chain: Protein Frey (99 aa).

Residues 13-29 (AGLSLFALYLVLAAALL) traverse the membrane as a helical segment. The disordered stretch occupies residues 64–90 (RPKHPWPRGPRPLLSRAQQRKRDGPDM).

As to quaternary structure, interacts with SPPL2C (via active sites); the interaction stabilizes FREY1 protein and inhibits SPPL2C proteolytic activity. Interacts with IZUMO1; the interaction retains IZUMO1 at the endoplasmic reticulum membrane and coordinates IZUMO1 complex assembly.

It localises to the endoplasmic reticulum membrane. Functionally, key regulator for male fertility expressed transiently in round spermatids where it recruits IZUMO1 at the endoplasmic reticulum (ER) membrane and coordinates the oolemmal binding multimeric complex (IZUMO1 complex) assembly. Upon complete assembly of the IZUMO1 complex, its ER retention is released, facilitating IZUMO1 complex export to the acrosome. Through the interaction with SPPL2C, inhibits its intramembrane protease activity directly accessing the catalytic center of an I-CLiP. This chain is Protein Frey (FREY1), found in Bos taurus (Bovine).